Consider the following 278-residue polypeptide: NAD kinase (278 aa).

Catalysis depends on D67, which acts as the Proton acceptor. NAD(+) is bound by residues D67 to G68, R72, N137 to E138, K148, R165, D167, T178 to S183, and Q237.

This sequence belongs to the NAD kinase family. It depends on a divalent metal cation as a cofactor.

The protein localises to the cytoplasm. The catalysed reaction is NAD(+) + ATP = ADP + NADP(+) + H(+). Functionally, involved in the regulation of the intracellular balance of NAD and NADP, and is a key enzyme in the biosynthesis of NADP. Catalyzes specifically the phosphorylation on 2'-hydroxyl of the adenosine moiety of NAD to yield NADP. The protein is NAD kinase of Thermococcus gammatolerans (strain DSM 15229 / JCM 11827 / EJ3).